The primary structure comprises 1370 residues: Zinc finger MYM-type protein 3 (1370 aa).

Composition is skewed to low complexity over residues 1-12 (MDPSDFPSPFDP), 40-56 (APSR…SSGA), and 130-146 (GAGA…EPLA). 2 disordered regions span residues 1–73 (MDPS…PGGV) and 85–310 (GLLY…MGTK). Positions 227–255 (TGKEIEKPPERVQKRSERVRRAEPPKPEV) are enriched in basic and acidic residues. Residues Ser-265 and Ser-269 each carry the phosphoserine modification. A compositionally biased stretch (acidic residues) spans 265–281 (SDEDSDAMVDDPNDEDF). Glycyl lysine isopeptide (Lys-Gly) (interchain with G-Cter in SUMO2) cross-links involve residues Lys-310, Lys-322, and Lys-330. 9 MYM-type zinc fingers span residues 334 to 368 (QLFC…TKDS), 380 to 424 (HEFC…LHEV), 431 to 466 (HRLC…RPGG), 479 to 513 (KRFC…FEML), 523 to 561 (SLFC…PCYY), 569 to 606 (YQFC…KPEV), 614 to 648 (FQFC…HEKL), 655 to 694 (KSFC…GVTE), and 701 to 735 (WDFC…LETI). A compositionally biased stretch (polar residues) spans 761-789 (NLDTQSGPESLLNSQSSESKPQTPSQTKV). Residues 761–831 (NLDTQSGPES…PPPPATPRKN (71 aa)) form a disordered region. Glycyl lysine isopeptide (Lys-Gly) (interchain with G-Cter in SUMO2) cross-links involve residues Lys-780 and Lys-788. The segment covering 790-799 (ENNHTVRTPD) has biased composition (basic and acidic residues). The residue at position 797 (Thr-797) is a Phosphothreonine. Residue Lys-806 forms a Glycyl lysine isopeptide (Lys-Gly) (interchain with G-Cter in SUMO2) linkage. Residues 816-827 (VPTPPPPPPPAT) are compositionally biased toward pro residues. Phosphothreonine is present on residues Thr-818 and Thr-827. Glycyl lysine isopeptide (Lys-Gly) (interchain with G-Cter in SUMO2) cross-links involve residues Lys-848, Lys-862, Lys-921, and Lys-1276.

May be a component of a BHC histone deacetylase complex that contains HDAC1, HDAC2, HMG20B/BRAF35, KDM1A, RCOR1/CoREST, PHF21A/BHC80, ZMYM2, ZNF217, ZMYM3, GSE1 and GTF2I. As to expression, ubiquitously expressed in all embryonic stages and adult tissues.

It is found in the nucleus. In terms of biological role, plays a role in the regulation of cell morphology and cytoskeletal organization. The protein is Zinc finger MYM-type protein 3 (Zmym3) of Mus musculus (Mouse).